Consider the following 128-residue polypeptide: MAYRKLGRTSSQRKAMLRDLTTDLLINESIVTTEARAKEIRKTVEKMITLGKRGDLHARRQAAAYVRNEIASENYDEVTDKYTSTTALQKLFSEIAPRYAERNGGYTRILKTEPRRGDAAPMAIIELV.

Belongs to the bacterial ribosomal protein bL17 family. Part of the 50S ribosomal subunit. Contacts protein L32.

The polypeptide is Large ribosomal subunit protein bL17 (Streptococcus pyogenes serotype M5 (strain Manfredo)).